The sequence spans 300 residues: Acetylglutamate kinase (300 aa).

Residues 68–69 (GG), arginine 90, and asparagine 195 each bind substrate.

Belongs to the acetylglutamate kinase family. ArgB subfamily.

The protein resides in the cytoplasm. It carries out the reaction N-acetyl-L-glutamate + ATP = N-acetyl-L-glutamyl 5-phosphate + ADP. It functions in the pathway amino-acid biosynthesis; L-arginine biosynthesis; N(2)-acetyl-L-ornithine from L-glutamate: step 2/4. Catalyzes the ATP-dependent phosphorylation of N-acetyl-L-glutamate. In Halorhodospira halophila (strain DSM 244 / SL1) (Ectothiorhodospira halophila (strain DSM 244 / SL1)), this protein is Acetylglutamate kinase.